An 88-amino-acid polypeptide reads, in one-letter code: UPF0335 protein WD_0557 (88 aa).

The protein belongs to the UPF0335 family.

This Wolbachia pipientis wMel protein is UPF0335 protein WD_0557.